A 111-amino-acid polypeptide reads, in one-letter code: Disintegrin DS-AS (111 aa).

A signal peptide spans 1–20 (MIQVLLVIICLAVFPYQGSC). A propeptide spanning residues 21-47 (IILESGNVNDYEIVYPKKLIVLPTGAM) is cleaved from the precursor. A Disintegrin domain is found at 47–111 (MNSPHPCCDP…PDCPRNPYKD (65 aa)). 4 cysteine pairs are disulfide-bonded: cysteine 53/cysteine 76, cysteine 67/cysteine 73, cysteine 72/cysteine 97, and cysteine 85/cysteine 104. Positions 89 to 91 (RGD) match the Cell attachment site motif.

In terms of assembly, heterodimer; disulfide-linked.

The protein localises to the secreted. Its function is as follows. Inhibits ADP-induced platelet aggregation in human platelet-rich plasma (IC(50) is 8 uM). This chain is Disintegrin DS-AS, found in Atheris squamigera (Variable bush viper).